The following is a 251-amino-acid chain: DNA repair protein RecO (251 aa).

It belongs to the RecO family.

Its function is as follows. Involved in DNA repair and RecF pathway recombination. In Lactococcus lactis subsp. cremoris (strain MG1363), this protein is DNA repair protein RecO.